A 524-amino-acid polypeptide reads, in one-letter code: 2-isopropylmalate synthase (524 aa).

The 263-residue stretch at 12-274 folds into the Pyruvate carboxyltransferase domain; sequence VIIFDTTLRD…WNRIETTMLT (263 aa). Residues D21, H209, H211, and N245 each contribute to the Mn(2+) site. Residues 398-524 are regulatory domain; that stretch reads KLMSLTVIAG…EDAPAVAVAG (127 aa).

This sequence belongs to the alpha-IPM synthase/homocitrate synthase family. LeuA type 1 subfamily. Homodimer. The cofactor is Mn(2+).

It localises to the cytoplasm. It catalyses the reaction 3-methyl-2-oxobutanoate + acetyl-CoA + H2O = (2S)-2-isopropylmalate + CoA + H(+). Its pathway is amino-acid biosynthesis; L-leucine biosynthesis; L-leucine from 3-methyl-2-oxobutanoate: step 1/4. Its function is as follows. Catalyzes the condensation of the acetyl group of acetyl-CoA with 3-methyl-2-oxobutanoate (2-ketoisovalerate) to form 3-carboxy-3-hydroxy-4-methylpentanoate (2-isopropylmalate). This chain is 2-isopropylmalate synthase, found in Rhodopseudomonas palustris (strain ATCC BAA-98 / CGA009).